The chain runs to 179 residues: Acireductone dioxygenase (179 aa).

The segment covering 1–12 (MVEAWYMDDSEE) has biased composition (acidic residues). The interval 1–21 (MVEAWYMDDSEEDQRRPHRLE) is disordered. Fe(2+)-binding residues include H88, H90, E94, and H133. Positions 88, 90, 94, and 133 each coordinate Ni(2+).

This sequence belongs to the acireductone dioxygenase (ARD) family. In terms of assembly, monomer. Interacts with MMP14. Fe(2+) is required as a cofactor. Requires Ni(2+) as cofactor.

The protein localises to the cytoplasm. The protein resides in the nucleus. Its subcellular location is the cell membrane. The catalysed reaction is 1,2-dihydroxy-5-(methylsulfanyl)pent-1-en-3-one + O2 = 4-methylsulfanyl-2-oxobutanoate + formate + 2 H(+). It carries out the reaction 1,2-dihydroxy-5-(methylsulfanyl)pent-1-en-3-one + O2 = 3-(methylsulfanyl)propanoate + CO + formate + 2 H(+). The protein operates within amino-acid biosynthesis; L-methionine biosynthesis via salvage pathway; L-methionine from S-methyl-5-thio-alpha-D-ribose 1-phosphate: step 5/6. Functionally, catalyzes 2 different reactions between oxygen and the acireductone 1,2-dihydroxy-3-keto-5-methylthiopentene (DHK-MTPene) depending upon the metal bound in the active site. Fe-containing acireductone dioxygenase (Fe-ARD) produces formate and 2-keto-4-methylthiobutyrate (KMTB), the alpha-ketoacid precursor of methionine in the methionine recycle pathway. Ni-containing acireductone dioxygenase (Ni-ARD) produces methylthiopropionate, carbon monoxide and formate, and does not lie on the methionine recycle pathway. Also down-regulates cell migration mediated by MMP14. This is Acireductone dioxygenase from Monodelphis domestica (Gray short-tailed opossum).